Consider the following 677-residue polypeptide: Elongation factor G 2 (677 aa).

The region spanning 8–283 is the tr-type G domain; that stretch reads SRIRNIGIIA…AVVNFLPSPE (276 aa). GTP-binding positions include 17-24, 81-85, and 135-138; these read AHIDAGKT, DTPGH, and NKMD.

Belongs to the TRAFAC class translation factor GTPase superfamily. Classic translation factor GTPase family. EF-G/EF-2 subfamily.

It localises to the cytoplasm. Its function is as follows. Catalyzes the GTP-dependent ribosomal translocation step during translation elongation. During this step, the ribosome changes from the pre-translocational (PRE) to the post-translocational (POST) state as the newly formed A-site-bound peptidyl-tRNA and P-site-bound deacylated tRNA move to the P and E sites, respectively. Catalyzes the coordinated movement of the two tRNA molecules, the mRNA and conformational changes in the ribosome. This Syntrophus aciditrophicus (strain SB) protein is Elongation factor G 2.